A 70-amino-acid chain; its full sequence is Movement protein TGBp3 (70 aa).

Over 1-6 (MEANTY) the chain is Lumenal. A helical transmembrane segment spans residues 7–27 (LNAIILVLVVTIIAVISTSLV). Residues 28–70 (RTEPCVIKITGESITVLACKLDAETIRAIADLKPLSVERLSFH) lie on the Cytoplasmic side of the membrane.

This sequence belongs to the Tymovirales TGBp3 protein family.

It is found in the host endoplasmic reticulum membrane. Functionally, plays a role in viral cell-to-cell propagation, by facilitating genome transport to neighboring plant cells through plasmosdesmata. May induce the formation of granular vesicles derived from the Endoplasmic reticulum, which align on actin filaments. The chain is Movement protein TGBp3 from Potato virus X (PVX).